Consider the following 580-residue polypeptide: Bifunctional lycopene cyclase/phytoene synthase (580 aa).

The next 3 membrane-spanning stretches (helical) occupy residues 3–23, 35–55, and 65–85; these read WEYAQVHLKYTIPFGVVLAAV, KLVFLITVAVVSTIPWDSYLI, and GVVVGLTAWDIPAEELFFFVI. N-linked (GlcNAc...) asparagine glycosylation occurs at asparagine 89. 4 consecutive transmembrane segments (helical) span residues 116 to 136, 139 to 159, 171 to 191, and 214 to 234; these read IAGQILFASAIIFGLVSVSSG, GMYMGLILIWACPFLLFLWSI, NTALPIALPTLYLWVVDTFAL, and IEEAVFFLLTNTLIVFGLIAC.

The protein in the N-terminal section; belongs to the lycopene beta-cyclase family. This sequence in the C-terminal section; belongs to the phytoene/squalene synthase family.

The protein localises to the membrane. The enzyme catalyses all-trans-lycopene = gamma-carotene. The catalysed reaction is gamma-carotene = all-trans-beta-carotene. It carries out the reaction 2 (2E,6E,10E)-geranylgeranyl diphosphate = 15-cis-phytoene + 2 diphosphate. It functions in the pathway carotenoid biosynthesis; beta-carotene biosynthesis. It participates in carotenoid biosynthesis; phytoene biosynthesis; all-trans-phytoene from geranylgeranyl diphosphate: step 1/1. Bifunctional enzyme; part of the car gene cluster that mediates the biosynthesis of neurosporaxanthin, a carboxylic apocarotenoid acting as an essential protective pigments and leading to orange pigmentation. CarAR catalyzes the first step of the pathway by converting geranylgeranyl diphosphate to phytoene, as well as the later cyclization step that transforms the carB product lycopene into gamma-carotene. CarAR also converts part of gamma-carotene into beta-carotene. Neurosporaxanthin is synthesized from geranyl-geranyl pyrophosphate (GGPP) through several enzymatic activities. Phytoene synthase activity performed by the bifunctional enzyme carAR first produces phytoene from geranyl-geranyl pyrophosphate (GGPP). The phytoene dehydrogenase carB then introduces 4 desaturations to lead to lycopene which is substrate of the carotene cyclase activity of carAR that leads to the production of gamma-carotene. CarB then performs a 5th desaturation reaction to yield torulene. Torulene is the substrate of the dioxidase carT that breaks the molecule, removing five carbon atoms to yield beta-apo-4'-carotenal, whereas the aldehyde dehydrogenase carD mediates the last step by converting beta-apo-4'-carotenal into neurosporaxanthin. The polypeptide is Bifunctional lycopene cyclase/phytoene synthase (Gibberella fujikuroi (strain CBS 195.34 / IMI 58289 / NRRL A-6831) (Bakanae and foot rot disease fungus)).